Here is a 90-residue protein sequence, read N- to C-terminus: MANHKSTQKSIRQDQKRNLINKSRKSNVKTFLKRVTLAINAGDKKVASEALSAAHSKLAKAANKGIYKLNTVSRKVSRLSRKIKQLEDKI.

Residues 1 to 10 (MANHKSTQKS) show a composition bias toward polar residues. Residues 1-25 (MANHKSTQKSIRQDQKRNLINKSRK) are disordered.

The protein belongs to the bacterial ribosomal protein bS20 family.

Binds directly to 16S ribosomal RNA. The chain is Small ribosomal subunit protein bS20 from Orientia tsutsugamushi (strain Ikeda) (Rickettsia tsutsugamushi).